Here is a 212-residue protein sequence, read N- to C-terminus: RNA chaperone ProQ (212 aa).

The disordered stretch occupies residues 114 to 149 (RIAKAGKTSAPAANAKKPVKKPVARRPKAAPSAKPV). Positions 118–129 (AGKTSAPAANAK) are enriched in low complexity. Positions 130 to 141 (KPVKKPVARRPK) are enriched in basic residues.

This sequence belongs to the ProQ family.

It localises to the cytoplasm. Its function is as follows. RNA chaperone with significant RNA binding, RNA strand exchange and RNA duplexing activities. The sequence is that of RNA chaperone ProQ from Shewanella piezotolerans (strain WP3 / JCM 13877).